The following is a 445-amino-acid chain: 2-oxoisovalerate dehydrogenase subunit alpha, mitochondrial (445 aa).

Residues 1-45 (MAVAIAAARVWRLNRGLSQAALLLLRQPGARGLARSHPPRQQQQF) constitute a mitochondrion transit peptide. The tract at residues 33–52 (LARSHPPRQQQQFSSLDDKP) is disordered. Thiamine diphosphate-binding residues include Y158 and R159. S206 is a K(+) binding site. S207 serves as a coordination point for thiamine diphosphate. K(+) contacts are provided by P208, T211, and Q212. E238 provides a ligand contact to Mg(2+). Positions 239, 240, and 265 each coordinate thiamine diphosphate. The Mg(2+) site is built by N267 and Y269. Residue H336 participates in thiamine diphosphate binding. Residue S337 is modified to Phosphoserine; by BCKDK. A Phosphothreonine modification is found at T338. S339 and S347 each carry phosphoserine. At K356 the chain carries N6-acetyllysine; alternate. At K356 the chain carries N6-succinyllysine; alternate. The residue at position 380 (K380) is an N6-succinyllysine.

It belongs to the BCKDHA family. As to quaternary structure, heterotetramer of 2 alpha/BCKDHA and 2 beta chains/BCKDHB that forms the branched-chain alpha-keto acid decarboxylase (E1) component of the BCKD complex. The branched-chain alpha-ketoacid dehydrogenase is a large complex composed of three major building blocks E1, E2 and E3. It is organized around E2, a 24-meric cubic core composed of DBT, to which are associated 6 to 12 copies of E1, and approximately 6 copies of the dehydrogenase E3, a DLD dimer. Interacts with PPM1K. Thiamine diphosphate is required as a cofactor. Requires Mg(2+) as cofactor. Phosphorylated at Ser-337 by BCKDK and dephosphorylated by protein phosphatase PPM1K.

Its subcellular location is the mitochondrion matrix. It catalyses the reaction N(6)-[(R)-lipoyl]-L-lysyl-[protein] + 3-methyl-2-oxobutanoate + H(+) = N(6)-[(R)-S(8)-2-methylpropanoyldihydrolipoyl]-L-lysyl-[protein] + CO2. Functionally, together with BCKDHB forms the heterotetrameric E1 subunit of the mitochondrial branched-chain alpha-ketoacid dehydrogenase (BCKD) complex. The BCKD complex catalyzes the multi-step oxidative decarboxylation of alpha-ketoacids derived from the branched-chain amino-acids valine, leucine and isoleucine producing CO2 and acyl-CoA which is subsequently utilized to produce energy. The E1 subunit catalyzes the first step with the decarboxylation of the alpha-ketoacid forming an enzyme-product intermediate. A reductive acylation mediated by the lipoylamide cofactor of E2 extracts the acyl group from the E1 active site for the next step of the reaction. This chain is 2-oxoisovalerate dehydrogenase subunit alpha, mitochondrial, found in Homo sapiens (Human).